The primary structure comprises 186 residues: Ribosome maturation factor RimM (186 aa).

The region spanning 103-174 (PEEYHYSDLI…ELQVQPPPGL (72 aa)) is the PRC barrel domain.

Belongs to the RimM family. As to quaternary structure, binds ribosomal protein uS19.

The protein resides in the cytoplasm. Its function is as follows. An accessory protein needed during the final step in the assembly of 30S ribosomal subunit, possibly for assembly of the head region. Essential for efficient processing of 16S rRNA. May be needed both before and after RbfA during the maturation of 16S rRNA. It has affinity for free ribosomal 30S subunits but not for 70S ribosomes. This Synechococcus sp. (strain JA-3-3Ab) (Cyanobacteria bacterium Yellowstone A-Prime) protein is Ribosome maturation factor RimM.